A 562-amino-acid chain; its full sequence is Cytochrome c oxidase subunit 1 (562 aa).

Residues 21–41 (TLYFLVLGFLALIVGSLFGPF) traverse the membrane as a helical segment. His-72 serves as a coordination point for Fe(II)-heme a. A run of 8 helical transmembrane segments spans residues 74-94 (VLNAIVFTQLFAQAIMVYLPA), 105-125 (LMWLSWWMAFIGLVVAALPLL), 144-164 (AFYLGASVFVLSTWVSIYIVL), 187-207 (VVFWLMWFLASLGLVLEAVLF), 227-247 (LFWWTGHPIVYFWLLPAYAII), 267-287 (LAFLLFLLLSTPVGFHHQFAD), 300-320 (VLTLFVAVPSLMTAFTVAASL), and 345-365 (AFVAPVLGLLGFIPGGAGGIV). Positions 233, 237, 282, and 283 each coordinate Cu cation. Residues 233 to 237 (HPIVY) constitute a cross-link (1'-histidyl-3'-tyrosine (His-Tyr)). His-384 contacts heme a3. 4 helical membrane-spanning segments follow: residues 385–405 (FHLQVASLVTLTAMGSLYWLL), 420–440 (LGLAVVWLWFLGMMIMAVGLH), 471–491 (VLAGIVLLVALLLFIYGLFSV), and 527–547 (IGFWFAVAAILVVLAYGPTLV). Residue His-386 participates in Fe(II)-heme a binding.

Belongs to the heme-copper respiratory oxidase family. It depends on heme as a cofactor. Cu cation is required as a cofactor.

The protein localises to the cell membrane. The catalysed reaction is 4 Fe(II)-[cytochrome c] + O2 + 8 H(+)(in) = 4 Fe(III)-[cytochrome c] + 2 H2O + 4 H(+)(out). It functions in the pathway energy metabolism; oxidative phosphorylation. In Thermus thermophilus (strain ATCC 27634 / DSM 579 / HB8), this protein is Cytochrome c oxidase subunit 1 (cbaA).